The primary structure comprises 1252 residues: Guanine nucleotide exchange factor SDC25 (1252 aa).

Positions 26–97 (QPIDVVECTY…PPSFTRSILN (72 aa)) constitute an SH3 domain. Disordered regions lie at residues 409–454 (IPAS…DTIW) and 623–648 (LNLDNAKDKKNGSQNTDIQEEEDEYE). The span at 416-428 (TSCSSETSHHSPS) shows a compositional bias: low complexity. The 133-residue stretch at 782–914 (SNNRIKGGSK…LLKEVNQKFK (133 aa)) folds into the N-terminal Ras-GEF domain. Residues 952-1199 (DPVLFATQLT…YQLSLIIEPK (248 aa)) enclose the Ras-GEF domain. Positions 1201-1252 (RKKVVPNSNSNNKSQEKSRDDQTDEGKTSTKKDRFSKFQLHKTKKKAPKVSK) are disordered. The span at 1214 to 1236 (SQEKSRDDQTDEGKTSTKKDRFS) shows a compositional bias: basic and acidic residues. Basic residues predominate over residues 1239–1252 (QLHKTKKKAPKVSK).

Functionally, promotes the exchange of Ras-bound GDP by GTP. This is Guanine nucleotide exchange factor SDC25 (SDC25) from Saccharomyces cerevisiae (strain RM11-1a) (Baker's yeast).